Reading from the N-terminus, the 865-residue chain is Xylosyltransferase 2 (865 aa).

The Cytoplasmic segment spans residues 1 to 15 (MVASARVQKLVRRYK). A helical; Signal-anchor for type II membrane protein membrane pass occupies residues 16 to 36 (LAIATALAILLLQGLVVWSFS). Over 37–865 (GLEEDEPGEK…GPVKADGRLR (829 aa)) the chain is Lumenal. The tract at residues 39 to 157 (EEDEPGEKGR…EGAPQPTDNG (119 aa)) is disordered. The segment covering 53–65 (RPLDPGEGSKDTD) has biased composition (basic and acidic residues). Positions 73–82 (SAGRRHGRWR) are enriched in basic residues. N-linked (GlcNAc...) asparagine glycosylation occurs at asparagine 122. Over residues 125 to 137 (GAAAGEALVGAAG) the composition is skewed to low complexity. Intrachain disulfides connect cysteine 162/cysteine 190, cysteine 206/cysteine 448, cysteine 467/cysteine 480, and cysteine 469/cysteine 478. Residues valine 239, aspartate 267, and 296-298 (TIW) contribute to the UDP-alpha-D-xylose site. Asparagine 327 carries an N-linked (GlcNAc...) asparagine glycan. Residue 400–401 (DW) coordinates UDP-alpha-D-xylose. Residues serine 481 and 504 to 505 (RK) contribute to the UDP-alpha-D-xylose site. Disulfide bonds link cysteine 581/cysteine 833 and cysteine 826/cysteine 839. Asparagine 683 carries an N-linked (GlcNAc...) asparagine glycan.

This sequence belongs to the glycosyltransferase 14 family. XylT subfamily. In terms of assembly, monomer. Requires Mg(2+) as cofactor. Mn(2+) serves as cofactor. Post-translationally, contains disulfide bonds.

Its subcellular location is the golgi apparatus membrane. The protein localises to the secreted. It carries out the reaction UDP-alpha-D-xylose + L-seryl-[protein] = 3-O-(beta-D-xylosyl)-L-seryl-[protein] + UDP + H(+). Its pathway is glycan metabolism; chondroitin sulfate biosynthesis. The protein operates within glycan metabolism; heparan sulfate biosynthesis. Catalyzes the first step in the biosynthesis of chondroitin sulfate, heparan sulfate and dermatan sulfate proteoglycans, such as DCN. Transfers D-xylose from UDP-D-xylose to specific serine residues of the core protein. The protein is Xylosyltransferase 2 (XYLT2) of Canis lupus familiaris (Dog).